The chain runs to 290 residues: Small ribosomal subunit protein bS6 (290 aa).

The tract at residues 208 to 233 is disordered; sequence VEEAKTTAKKPAAPKMSAAERAKVDG.

Belongs to the bacterial ribosomal protein bS6 family.

In terms of biological role, binds together with bS18 to 16S ribosomal RNA. The sequence is that of Small ribosomal subunit protein bS6 from Mesoplasma florum (strain ATCC 33453 / NBRC 100688 / NCTC 11704 / L1) (Acholeplasma florum).